Reading from the N-terminus, the 875-residue chain is Neurotrypsin (875 aa).

Residues 1–20 (MTLARFVLALVLGALPEVVG) form the signal peptide. N-linked (GlcNAc...) asparagine glycosylation occurs at Asn-26. The tract at residues 30-87 (HHRHRHSPPPGPQYPYYLPTHQRPPRTRPPPPLPRFPRPPRALPAQRPHALQAGHTPR) is disordered. Residues 56–71 (TRPPPPLPRFPRPPRA) show a composition bias toward pro residues. The Kringle domain occupies 93–165 (CPAGELWVSV…GKVDWGYCDC (73 aa)). Intrachain disulfides connect Cys-93/Cys-165, Cys-109/Cys-149, Cys-138/Cys-163, Cys-195/Cys-259, Cys-208/Cys-269, Cys-239/Cys-249, Cys-305/Cys-369, Cys-318/Cys-379, Cys-349/Cys-359, Cys-412/Cys-475, Cys-425/Cys-485, Cys-455/Cys-465, Cys-525/Cys-589, Cys-538/Cys-599, Cys-569/Cys-579, Cys-619/Cys-750, Cys-661/Cys-677, Cys-765/Cys-831, Cys-794/Cys-808, and Cys-821/Cys-850. 4 consecutive SRCR domains span residues 170–271 (VRLR…TCSF), 280–381 (IRLV…SCTP), 387–487 (IRLA…ACYP), and 500–601 (VRLM…ICDY). The zymogen activation region stretch occupies residues 619–630 (CGLRLLHRRQKR). One can recognise a Peptidase S1 domain in the interval 631-874 (IIGGKNSLRG…FVPWIKSVTK (244 aa)). Catalysis depends on His-676, which acts as the Charge relay system. Asn-683 carries N-linked (GlcNAc...) asparagine glycosylation. The active-site Charge relay system is Asp-726. The active-site Charge relay system is the Ser-825.

It belongs to the peptidase S1 family.

It localises to the secreted. Plays a role in neuronal plasticity and the proteolytic action may subserve structural reorganizations associated with learning and memory operations. The sequence is that of Neurotrypsin (PRSS12) from Macaca mulatta (Rhesus macaque).